The sequence spans 104 residues: Iron-sulfur cluster assembly protein CyaY (104 aa).

The protein belongs to the frataxin family.

Functionally, involved in iron-sulfur (Fe-S) cluster assembly. May act as a regulator of Fe-S biogenesis. The sequence is that of Iron-sulfur cluster assembly protein CyaY from Rickettsia prowazekii (strain Madrid E).